The following is a 1024-amino-acid chain: MLKIFEKIFGSKHEKDIKKIRPLVSSINELQMTMASLSNDQLRERGVTLKQRVRKTLEPLEQEKTSLSRKLDNPDINLEEAETINTRLDTLAEEYEQATAAILEELLPETFALVKESCVRLKGHTYLVMGREMIWDMVPYDVQLIGGIVLHSGKISEMATGEGKTLVSTLPVFLNALTGRGVHVVTVNDYLAQRDKEWMSPVFAFHNLSVGVILNTMRPEERREQYACDITYGTNNEFGFDYLRDNMASTPEEMVQRNFYYAIVDEVDSVLIDEARTPLIISGPVPNADNSKFQEIKPWIEQLVRAQQQLVAKYLGEAEKLIKTKPGDPEAGLALLRVKRGQPKNTRYIKMLSQQGMAKLVQGTENEYLKDNSSRMQEVDDELYFAVDEKANTIDLTDKGRDFLSKLSHQDSDIFMLPDVGSEVAIIESDALIPVADKIQKKDEVYRLFADRSERLHNISQLLKAYSLFERDDEYVVQNGQVMIVDEFTGRILPGRRYSDGLHQAIEAKENVKIEGETQTMATITIQNFFRLYKKLAGMTGTAETEASEFYEIYKLDVVVIPTNASIVRKDMDDLVYKTRREKYNAVVLKVEELQKKGQPVLVGTTSVEVSETLSRMLRARKIVHNVLNARQNDREAEIVAEAGQKNAVTIATNMAGRGTDIKLGSGVRELGGLFILGSERHESRRIDRQLRGRAGRQGDPGESVFFVSLEDELMRLFGSDRVISVMDRLGHEEGDVIEHSMITKSIERAQKKVEEQNFSIRKRLLEYDDVLNQQREVIYSRRRNGLIKDRLTSDILDLLRDYSELVIKKHHKMLDVDAIEEQLMRELSIEFKPERNTFEREGIEATAEKLYQTALAFYRRKEAAMPEEIMQQIEKYAVLSVIDLRWREHLREIDSLREGINLRAYGQKDPLLEYKQEAFRLFIDLLHDIELETLSLAFKLFPVNPDEAREMEERQRKAAVRQEKLIAQHKAAESVYTASSDEPETNQEESPQQPAIAEKKPGRNDLCPCGSGKKYKNCHGQQP.

Residues Gln143, 161–165 (GEGKT), and Asp661 each bind ATP. A disordered region spans residues 970-1024 (HKAAESVYTASSDEPETNQEESPQQPAIAEKKPGRNDLCPCGSGKKYKNCHGQQP). Positions 1008, 1010, 1019, and 1020 each coordinate Zn(2+).

This sequence belongs to the SecA family. As to quaternary structure, monomer and homodimer. Part of the essential Sec protein translocation apparatus which comprises SecA, SecYEG and auxiliary proteins SecDF. Other proteins may also be involved. It depends on Zn(2+) as a cofactor.

Its subcellular location is the cell inner membrane. It is found in the cytoplasm. The enzyme catalyses ATP + H2O + cellular proteinSide 1 = ADP + phosphate + cellular proteinSide 2.. Its function is as follows. Part of the Sec protein translocase complex. Interacts with the SecYEG preprotein conducting channel. Has a central role in coupling the hydrolysis of ATP to the transfer of proteins into and across the cell membrane, serving as an ATP-driven molecular motor driving the stepwise translocation of polypeptide chains across the membrane. In Pelodictyon phaeoclathratiforme (strain DSM 5477 / BU-1), this protein is Protein translocase subunit SecA.